Reading from the N-terminus, the 427-residue chain is Adenylosuccinate synthetase (427 aa).

Residues 12–18 (GDEGKGK) and 40–42 (GHT) contribute to the GTP site. Asp-13 (proton acceptor) is an active-site residue. Mg(2+) is bound by residues Asp-13 and Gly-40. IMP contacts are provided by residues 13 to 16 (DEGK), 38 to 41 (NAGH), Thr-128, Arg-142, Gln-223, Thr-238, and Arg-302. His-41 (proton donor) is an active-site residue. Position 298-304 (298-304 (TTTGRPR)) interacts with substrate. GTP is bound by residues Arg-304, 330-332 (SID), and 412-414 (SVG).

The protein belongs to the adenylosuccinate synthetase family. In terms of assembly, homodimer. The cofactor is Mg(2+).

It is found in the cytoplasm. The catalysed reaction is IMP + L-aspartate + GTP = N(6)-(1,2-dicarboxyethyl)-AMP + GDP + phosphate + 2 H(+). It functions in the pathway purine metabolism; AMP biosynthesis via de novo pathway; AMP from IMP: step 1/2. Plays an important role in the de novo pathway of purine nucleotide biosynthesis. Catalyzes the first committed step in the biosynthesis of AMP from IMP. The protein is Adenylosuccinate synthetase of Staphylococcus aureus (strain N315).